Here is a 352-residue protein sequence, read N- to C-terminus: Quinolinate synthase (352 aa).

Positions 48 and 69 each coordinate iminosuccinate. Cysteine 114 is a binding site for [4Fe-4S] cluster. Residues 140 to 142 and serine 157 contribute to the iminosuccinate site; that span reads YAN. Residue cysteine 201 coordinates [4Fe-4S] cluster. Iminosuccinate-binding positions include 227 to 229 and threonine 244; that span reads HPE. Cysteine 298 is a binding site for [4Fe-4S] cluster.

Belongs to the quinolinate synthase family. Type 1 subfamily. The cofactor is [4Fe-4S] cluster.

It localises to the cytoplasm. The enzyme catalyses iminosuccinate + dihydroxyacetone phosphate = quinolinate + phosphate + 2 H2O + H(+). Its pathway is cofactor biosynthesis; NAD(+) biosynthesis; quinolinate from iminoaspartate: step 1/1. Functionally, catalyzes the condensation of iminoaspartate with dihydroxyacetone phosphate to form quinolinate. The chain is Quinolinate synthase from Pseudomonas entomophila (strain L48).